Consider the following 657-residue polypeptide: Threonine--tRNA ligase (657 aa).

Positions 7 to 70 (QQASIAITLP…LCDANIEIVT (64 aa)) constitute a TGS domain. The interval 253–555 (DHRKLGTELE…LIEHTAGNFP (303 aa)) is catalytic. Residues Cys-351, His-402, and His-532 each contribute to the Zn(2+) site.

The protein belongs to the class-II aminoacyl-tRNA synthetase family. Homodimer. The cofactor is Zn(2+).

Its subcellular location is the cytoplasm. It carries out the reaction tRNA(Thr) + L-threonine + ATP = L-threonyl-tRNA(Thr) + AMP + diphosphate + H(+). Functionally, catalyzes the attachment of threonine to tRNA(Thr) in a two-step reaction: L-threonine is first activated by ATP to form Thr-AMP and then transferred to the acceptor end of tRNA(Thr). Also edits incorrectly charged L-seryl-tRNA(Thr). The sequence is that of Threonine--tRNA ligase from Chlorobium limicola (strain DSM 245 / NBRC 103803 / 6330).